The chain runs to 405 residues: MERLQKQPLTSPGSVSPSRDSSVPGSPSSIVAKMDNQVLGYKDLAAIPKDKAILDIERPDLMIYEPHFTYSLLEHVELPRSRERSLSPKSTSPPPSPEVWADSRSPGIISQASAPRTTGTPRTSLPHFHHPETSRPDSNIYKKPPIYKQRESVGGSPQTKHLIEDLIIESSKFPAAQPPDPNQPAKIETDYWPCPPSLAVVETEWRKRKASRRGAEEEEEEEDDDSGEEMKALRERQREELSKVTSNLGKMILKEEMEKSLPIRRKTRSLPDRTPFHTSLHQGTSKSSSLPAYGRTTLSRLQSTEFSPSGSETGSPGLQNGEGQRGRMDRGNSLPCVLEQKIYPYEMLVVTNKGRTKLPPGVDRMRLERHLSAEDFSRVFAMSPEEFGKLALWKRNELKKKASLF.

Disordered stretches follow at residues 1 to 30 (MERLQKQPLTSPGSVSPSRDSSVPGSPSSI), 79 to 158 (PRSR…GSPQ), 173 to 192 (FPAAQPPDPNQPAKIETDYW), and 203 to 332 (TEWR…DRGN). A compositionally biased stretch (low complexity) spans 11–29 (SPGSVSPSRDSSVPGSPSS). 9 positions are modified to phosphoserine: serine 16, serine 18, serine 26, serine 92, serine 96, serine 105, serine 110, serine 113, and serine 156. Residues 108-123 (IISQASAPRTTGTPRT) are compositionally biased toward polar residues. The span at 216–227 (EEEEEEEDDDSG) shows a compositional bias: acidic residues. The segment at 224-308 (DDSGEEMKAL…SRLQSTEFSP (85 aa)) is interaction with RASGRF2. Position 226 is a phosphoserine (serine 226). 2 stretches are compositionally biased toward basic and acidic residues: residues 228-242 (EEMKALRERQREELS) and 252-261 (ILKEEMEKSL). Phosphoserine is present on residues serine 269, serine 279, serine 289, serine 303, serine 315, serine 333, serine 372, and serine 383. The segment covering 276-322 (FHTSLHQGTSKSSSLPAYGRTTLSRLQSTEFSPSGSETGSPGLQNGE) has biased composition (polar residues). The region spanning 337–405 (VLEQKIYPYE…NELKKKASLF (69 aa)) is the HP domain. The residue at position 403 (serine 403) is a Phosphoserine; by PKA.

This sequence belongs to the villin/gelsolin family. As to quaternary structure, monomeric (isoform 2); under reducing conditions. Self-associates. Exists under oxidizing condition as a trimer of two isoforms 2 and isoform 1 linked by disulfide bonds. Found in a complex with DMTN, F-actin and spectrin. Found in a complex with ADD2, DMTN and SLC2A1. Interacts with F-actin, ITPKB, RASGRF2 and spectrin. Isoform 2 interacts with SLC2A1 (via C-terminus cytoplasmic region). Isoform 1 and isoform 2 interact (phosphorylated form) with plasmodium berghei 14-3-3 protein; the interaction occurs in a PKA-dependent manner. Post-translationally, phosphorylated. Phosphorylation at Ser-403 by PKA causes the C-terminal headpiece domain to associate with the N-terminal core domain, and leads to the inhibition of its actin bundling activity. In terms of processing, the N-terminus is blocked. Expressed in platelets (at protein level). Expressed in heart, brain, lung, skeletal muscle, and kidney.

Its subcellular location is the cytoplasm. The protein resides in the cytosol. The protein localises to the perinuclear region. It is found in the cytoskeleton. It localises to the cell membrane. Its subcellular location is the membrane. The protein resides in the endomembrane system. The protein localises to the cell projection. Its function is as follows. Membrane-cytoskeleton-associated protein with F-actin-binding activity that induces F-actin bundles formation and stabilization. Its F-actin-bundling activity is reversibly regulated upon its phosphorylation by the cAMP-dependent protein kinase A (PKA). Binds to the erythrocyte membrane glucose transporter-1 SLC2A1/GLUT1, and hence stabilizes and attaches the spectrin-actin network to the erythrocytic plasma membrane. Plays a role in maintaining the functional integrity of PKA-activated erythrocyte shape and the membrane mechanical properties. Also plays a role as a modulator of actin dynamics in fibroblasts; acts as a negative regulator of the RhoA activation pathway. In platelets, functions as a regulator of internal calcium mobilization across the dense tubular system that affects platelet granule secretion pathways and aggregation. Also required for the formation of a diverse set of cell protrusions, such as filopodia and lamellipodia, necessary for platelet cell spreading, motility and migration. Acts as a tumor suppressor and inhibits malignant cell transformation. The protein is Dematin (DMTN) of Homo sapiens (Human).